The chain runs to 99 residues: Putative septation protein SpoVG (99 aa).

It belongs to the SpoVG family.

Could be involved in septation. This chain is Putative septation protein SpoVG, found in Myxococcus xanthus (strain DK1622).